The following is a 355-amino-acid chain: Alanine racemase (355 aa).

The active-site Proton acceptor; specific for D-alanine is K34. At K34 the chain carries N6-(pyridoxal phosphate)lysine. Residue R133 coordinates substrate. Catalysis depends on Y249, which acts as the Proton acceptor; specific for L-alanine. M297 provides a ligand contact to substrate.

The protein belongs to the alanine racemase family. Pyridoxal 5'-phosphate serves as cofactor.

It catalyses the reaction L-alanine = D-alanine. It participates in amino-acid biosynthesis; D-alanine biosynthesis; D-alanine from L-alanine: step 1/1. Its function is as follows. Catalyzes the interconversion of L-alanine and D-alanine. May also act on other amino acids. This chain is Alanine racemase (alr), found in Rickettsia conorii (strain ATCC VR-613 / Malish 7).